The primary structure comprises 525 residues: Tigger transposable element-derived protein 2 (525 aa).

The HTH psq-type domain occupies 1-52 (MLGKRKRVVLTIKDKLDIIKKLEEGNSFKKLSVLYGIGESTVRDIKKNKERI). 2 consecutive DNA-binding regions (H-T-H motif) follow at residues 28-48 (FKKL…IKKN) and 100-132 (TICA…FKQR). Residues 67–139 (KRKSMKSSTY…KQRHGIPKAA (73 aa)) form the HTH CENPB-type domain. One can recognise a DDE-1 domain in the interval 168–385 (LLPEQIYGAD…IRSNTITRAW (218 aa)).

Belongs to the tigger transposable element derived protein family.

The protein localises to the nucleus. The sequence is that of Tigger transposable element-derived protein 2 (Tigd2) from Mus musculus (Mouse).